The primary structure comprises 308 residues: Sulfate adenylyltransferase subunit 2 (308 aa).

The segment at 286-308 is disordered; the sequence is RQGRIIDHDGSASMEKKKQEGYF.

It belongs to the PAPS reductase family. CysD subfamily. Heterodimer composed of CysD, the smaller subunit, and CysN.

It carries out the reaction sulfate + ATP + H(+) = adenosine 5'-phosphosulfate + diphosphate. Its pathway is sulfur metabolism; hydrogen sulfide biosynthesis; sulfite from sulfate: step 1/3. In terms of biological role, with CysN forms the ATP sulfurylase (ATPS) that catalyzes the adenylation of sulfate producing adenosine 5'-phosphosulfate (APS) and diphosphate, the first enzymatic step in sulfur assimilation pathway. APS synthesis involves the formation of a high-energy phosphoric-sulfuric acid anhydride bond driven by GTP hydrolysis by CysN coupled to ATP hydrolysis by CysD. This is Sulfate adenylyltransferase subunit 2 from Nocardia farcinica (strain IFM 10152).